The primary structure comprises 704 residues: Zinc finger protein MSN2 (704 aa).

A disordered region spans residues 84–246 (PSTTDNSLHL…SISNSNSNST (163 aa)). Residues 91–112 (LHLKADSNKNRDARTIENDSEI) are compositionally biased toward basic and acidic residues. Residues 113 to 133 (KSTNNASGSGANQYTTLTSPY) show a composition bias toward polar residues. Residues 141-166 (NMNNPLQSPSPSSVPQNPTINPPINT) show a composition bias toward low complexity. Composition is skewed to polar residues over residues 167 to 193 (ASNETNLSPQTSNGNETLISPRAQQHT) and 204 to 220 (NGANSNLFIDTNPNNLN). The span at 228–246 (NSDTNSYSNSISNSNSNST) shows a compositional bias: low complexity. A 9aaTAD motif is present at residues 261 to 269 (SMLDDYVSS). Serine 288 and serine 304 each carry phosphoserine. Residues 418-437 (NRVQHKQLTSSHNNSSTNMK) are disordered. Positions 426–437 (TSSHNNSSTNMK) are enriched in polar residues. Serine 451 and serine 582 each carry phosphoserine. The segment at 592 to 634 (LTNQQNNISSSSVNSTGNGAGVTKERRPSYRRKSMTPSRRSSV) is disordered. Over residues 593–608 (TNQQNNISSSSVNSTG) the composition is skewed to low complexity. Position 633 is a phosphoserine (serine 633). 2 C2H2-type zinc fingers span residues 647–665 (FHCHICPKSFKRSEHLKRH) and 676–698 (FACHICDKKFSRSDNLSQHIKTH).

In terms of assembly, interacts with WHI2.

It localises to the cytoplasm. The protein localises to the nucleus. Its function is as follows. Positive transcriptional factor that acts as a component of the stress responsive system. Recognizes and binds to the stress response element (STRE) which is involved in the response to various forms of stress (heat, oxidative, osmotic, etc.). Involved in the regulation of the CTT1, DDR2, HSP12 genes. May be regulated via WHI2-PSR1 complex phosphatase activity. The polypeptide is Zinc finger protein MSN2 (MSN2) (Saccharomyces cerevisiae (strain ATCC 204508 / S288c) (Baker's yeast)).